The following is a 487-amino-acid chain: Pentatricopeptide repeat-containing protein At5g61370, mitochondrial (487 aa).

A mitochondrion-targeting transit peptide spans 1–90 (MMSTTVRLNR…TSPRRLLRFF (90 aa)). 8 PPR repeats span residues 137-171 (DKQT…SCPQ), 172-202 (DGFT…HKDV), 207-241 (ELSV…GITP), 242-283 (DLFC…KIQP), 284-318 (TSMS…GCDP), 319-353 (DTGS…GFRP), 354-388 (ERKF…SVGG), and 389-423 (YGQV…DVTL). The disordered stretch occupies residues 466–487 (TKPKLKLKPKRRSKTKKKNLQH).

This sequence belongs to the PPR family. P subfamily.

It localises to the mitochondrion. The polypeptide is Pentatricopeptide repeat-containing protein At5g61370, mitochondrial (Arabidopsis thaliana (Mouse-ear cress)).